Consider the following 1984-residue polypeptide: Sodium channel protein type 9 subunit alpha (1984 aa).

The Cytoplasmic portion of the chain corresponds to Met-1–His-125. Residues Arg-26–Lys-39 show a composition bias toward basic and acidic residues. Residues Arg-26–Ala-55 form a disordered region. One copy of the I repeat lies at Phe-112 to Gln-410. A helical membrane pass occupies residues Ser-126–Met-145. Over Ser-146 to Asp-150 the chain is Extracellular. Residues Trp-151–Leu-172 form a helical membrane-spanning segment. The Cytoplasmic segment spans residues Ala-173–Arg-185. The helical transmembrane segment at Asp-186–Phe-204 threads the bilayer. Residues Val-205–Val-210 lie on the Extracellular side of the membrane. Residues Ser-211–Val-227 form a helical membrane-spanning segment. Topologically, residues Ile-228 to Ser-241 are cytoplasmic. Residues Val-242–Phe-267 traverse the membrane as a helical segment. The Extracellular segment spans residues Met-268–Thr-346. Cys-275 and Cys-324 are joined by a disulfide. The segment at residues Phe-347–Trp-363 is an intramembrane region (pore-forming). Residues Glu-364–Lys-376 lie on the Extracellular side of the membrane. The helical transmembrane segment at Thr-377 to Ala-402 threads the bilayer. A coiled-coil region spans residues Ala-402 to Ser-449. The Cytoplasmic portion of the chain corresponds to Met-403–Phe-744. Residues Leu-458–Lys-471 show a composition bias toward low complexity. Disordered regions lie at residues Leu-458–Gly-540 and His-574–Pro-609. Residues Lys-474–Lys-486 are compositionally biased toward basic residues. Composition is skewed to basic and acidic residues over residues Ser-489–Arg-509 and His-574–Arg-584. Residues Leu-684–Lys-708 adopt a coiled-coil conformation. The stretch at Cys-725–Gln-988 is one II repeat. Residues Val-745–Ala-761 traverse the membrane as a helical segment. Residues Met-762–Glu-770 are Extracellular-facing. Residues Phe-771–Ile-795 traverse the membrane as a helical segment. Residues Ala-796–Gln-804 lie on the Cytoplasmic side of the membrane. Residues Val-805–Glu-821 form a helical membrane-spanning segment. Over Leu-822–Leu-830 the chain is Extracellular. A helical membrane pass occupies residues Ser-831–Ser-847. The Cytoplasmic segment spans residues Trp-848 to Ala-864. A helical membrane pass occupies residues Leu-865–Phe-887. Residues Gly-888–His-914 lie on the Extracellular side of the membrane. An intrachain disulfide couples Cys-896 to Cys-902. Residues Ser-915–Trp-927 constitute an intramembrane region (pore-forming). Residues Ile-928 to Gly-939 lie on the Extracellular side of the membrane. A disulfide bridge links Cys-934 with Cys-943. The chain crosses the membrane as a helical span at residues Gln-940–Leu-966. Topologically, residues Leu-967–Arg-1185 are cytoplasmic. Disordered regions lie at residues Lys-1015–Asn-1039 and Pro-1089–Asn-1145. The span at Gly-1019–Asn-1035 shows a compositional bias: basic and acidic residues. Residues Gly-1135–Asn-1145 show a composition bias toward acidic residues. The stretch at Thr-1178–Leu-1486 is one III repeat. A helical membrane pass occupies residues Ile-1186–Glu-1210. The Extracellular segment spans residues Asp-1211 to Ile-1222. The chain crosses the membrane as a helical span at residues Ile-1223–Tyr-1248. Residues Lys-1249–Thr-1250 lie on the Cytoplasmic side of the membrane. A helical transmembrane segment spans residues Tyr-1251 to Leu-1276. At Gly-1277–Lys-1285 the chain is on the extracellular side. Residues Ser-1286–Phe-1302 traverse the membrane as a helical segment. The Cytoplasmic portion of the chain corresponds to Glu-1303–Ala-1315. Residues Ile-1316–Leu-1340 traverse the membrane as a helical segment. Residues Phe-1341–Leu-1392 lie on the Extracellular side of the membrane. Cys-1348 and Cys-1368 form a disulfide bridge. The segment at residues Gly-1393–Phe-1403 is an intramembrane region (pore-forming). Residues Lys-1404 to Leu-1429 are Extracellular-facing. A helical membrane pass occupies residues Tyr-1430–Ile-1455. At Asp-1456–Asn-1512 the chain is on the cytoplasmic side. Ser-1488 carries the post-translational modification Phosphoserine; by PKC. One copy of the IV repeat lies at Ile-1495–Gln-1793. Residues Gln-1513–Val-1532 traverse the membrane as a helical segment. Residues Glu-1533–Phe-1543 are Extracellular-facing. Residues Val-1544–Ile-1565 form a helical membrane-spanning segment. The Cytoplasmic segment spans residues Ser-1566–Val-1574. The helical transmembrane segment at Gly-1575–Met-1596 threads the bilayer. Residues Ile-1597–Thr-1605 are Extracellular-facing. A helical transmembrane segment spans residues Leu-1606–Ala-1625. The Cytoplasmic segment spans residues Lys-1626–Ser-1638. Residues Leu-1639–Met-1661 traverse the membrane as a helical segment. The Extracellular portion of the chain corresponds to Ser-1662–Asn-1684. The pore-forming intramembrane region spans Ser-1685–Gly-1697. Over Trp-1698–Pro-1731 the chain is Extracellular. A disulfide bridge links Cys-1713 with Cys-1728. Residues Ser-1732 to Ile-1757 traverse the membrane as a helical segment. Residues Leu-1758 to Lys-1984 lie on the Cytoplasmic side of the membrane. The region spanning Glu-1887–Lys-1916 is the IQ domain. The disordered stretch occupies residues Asp-1933–Lys-1984. A compositionally biased stretch (polar residues) spans Ala-1946 to Ser-1958. Residues Thr-1960–Lys-1984 are compositionally biased toward basic and acidic residues.

Belongs to the sodium channel (TC 1.A.1.10) family. Nav1.7/SCN9A subfamily. As to quaternary structure, the Nav1.7 voltage-gated sodium channel consists of an ion-conducting alpha subunit SCN9A which is functional on its own regulated by one or more beta-1 (SCN1B), beta-2 (SCN2B), beta-3 (SCN3B) and beta-4 (SCN4B) subunits. SCN1B and SCN3B are non-covalently associated with SCN9A. SCN2B and SCN4B are disulfide-linked to SCN9A. SCN1B regulates channel inactivation. Interacts with NEDD4 and NEDD4L; regulates Nav1.7 activity most probably through ubiquitination and subsequent endocytosis. Interacts with TMEM233; modulates the gating properties of NaV1.7. Ubiquitinated by NEDD4L; which may promote its endocytosis. Post-translationally, phosphorylation at Ser-1488 by PKC in a highly conserved cytoplasmic loop increases peak sodium currents. As to expression, expressed strongly in sciatic nerves, with moderate levels in kidney. Not detected in liver, brain and muscle.

It is found in the cell membrane. The protein localises to the cell projection. The protein resides in the neuron projection. Its subcellular location is the axon. The enzyme catalyses Na(+)(in) = Na(+)(out). In terms of biological role, pore-forming subunit of Nav1.7, a voltage-gated sodium (Nav) channel that directly mediates the depolarizing phase of action potentials in excitable membranes. Navs, also called VGSCs (voltage-gated sodium channels) or VDSCs (voltage-dependent sodium channels), operate by switching between closed and open conformations depending on the voltage difference across the membrane. In the open conformation they allow Na(+) ions to selectively pass through the pore, along their electrochemical gradient. The influx of Na(+) ions provokes membrane depolarization, initiating the propagation of electrical signals throughout cells and tissues. Nav1.7 plays a crucial role in controlling the excitability and action potential propagation from nociceptor neurons, thereby contributing to the sensory perception of pain. This Mus musculus (Mouse) protein is Sodium channel protein type 9 subunit alpha.